The primary structure comprises 87 residues: Small ribosomal subunit protein eS21B (87 aa).

Met-1 is modified (N-acetylmethionine).

This sequence belongs to the eukaryotic ribosomal protein eS21 family. As to quaternary structure, component of the small ribosomal subunit (SSU). Mature yeast ribosomes consist of a small (40S) and a large (60S) subunit. The 40S small subunit contains 1 molecule of ribosomal RNA (18S rRNA) and 33 different proteins (encoded by 57 genes). The large 60S subunit contains 3 rRNA molecules (25S, 5.8S and 5S rRNA) and 46 different proteins (encoded by 81 genes). N-terminally acetylated by acetyltransferase NatB.

The protein localises to the cytoplasm. Its function is as follows. Component of the ribosome, a large ribonucleoprotein complex responsible for the synthesis of proteins in the cell. The small ribosomal subunit (SSU) binds messenger RNAs (mRNAs) and translates the encoded message by selecting cognate aminoacyl-transfer RNA (tRNA) molecules. The large subunit (LSU) contains the ribosomal catalytic site termed the peptidyl transferase center (PTC), which catalyzes the formation of peptide bonds, thereby polymerizing the amino acids delivered by tRNAs into a polypeptide chain. The nascent polypeptides leave the ribosome through a tunnel in the LSU and interact with protein factors that function in enzymatic processing, targeting, and the membrane insertion of nascent chains at the exit of the ribosomal tunnel. eS21 is required for the processing of the 20S rRNA-precursor to mature 18S rRNA in a late step of the maturation of 40S ribosomal subunits. Has a physiological role leading to 18S rRNA stability. The polypeptide is Small ribosomal subunit protein eS21B (Saccharomyces cerevisiae (strain ATCC 204508 / S288c) (Baker's yeast)).